Consider the following 379-residue polypeptide: Dual-specificity RNA methyltransferase RlmN (379 aa).

Glu-95 (proton acceptor) is an active-site residue. One can recognise a Radical SAM core domain in the interval 101-345 (EETRGTLCVS…TTVRKTRGDD (245 aa)). Cysteines 108 and 350 form a disulfide. Positions 115, 119, and 122 each coordinate [4Fe-4S] cluster. Residues 176–177 (GE), Ser-208, 230–232 (SLH), and Asn-307 each bind S-adenosyl-L-methionine. Catalysis depends on Cys-350, which acts as the S-methylcysteine intermediate.

Belongs to the radical SAM superfamily. RlmN family. [4Fe-4S] cluster serves as cofactor.

Its subcellular location is the cytoplasm. The enzyme catalyses adenosine(2503) in 23S rRNA + 2 reduced [2Fe-2S]-[ferredoxin] + 2 S-adenosyl-L-methionine = 2-methyladenosine(2503) in 23S rRNA + 5'-deoxyadenosine + L-methionine + 2 oxidized [2Fe-2S]-[ferredoxin] + S-adenosyl-L-homocysteine. It carries out the reaction adenosine(37) in tRNA + 2 reduced [2Fe-2S]-[ferredoxin] + 2 S-adenosyl-L-methionine = 2-methyladenosine(37) in tRNA + 5'-deoxyadenosine + L-methionine + 2 oxidized [2Fe-2S]-[ferredoxin] + S-adenosyl-L-homocysteine. Functionally, specifically methylates position 2 of adenine 2503 in 23S rRNA and position 2 of adenine 37 in tRNAs. m2A2503 modification seems to play a crucial role in the proofreading step occurring at the peptidyl transferase center and thus would serve to optimize ribosomal fidelity. The protein is Dual-specificity RNA methyltransferase RlmN of Burkholderia cenocepacia (strain HI2424).